The primary structure comprises 341 residues: 3-dehydroquinate synthase (341 aa).

Residues 54–59 (DGEKYK), 88–92 (GVVTD), 112–113 (TT), Lys-125, Lys-133, and 151–154 (TLST) contribute to the NAD(+) site. Residues Glu-166, His-220, and His-236 each contribute to the Zn(2+) site.

This sequence belongs to the sugar phosphate cyclases superfamily. Dehydroquinate synthase family. NAD(+) serves as cofactor. The cofactor is Co(2+). Requires Zn(2+) as cofactor.

It is found in the cytoplasm. It carries out the reaction 7-phospho-2-dehydro-3-deoxy-D-arabino-heptonate = 3-dehydroquinate + phosphate. The protein operates within metabolic intermediate biosynthesis; chorismate biosynthesis; chorismate from D-erythrose 4-phosphate and phosphoenolpyruvate: step 2/7. In terms of biological role, catalyzes the conversion of 3-deoxy-D-arabino-heptulosonate 7-phosphate (DAHP) to dehydroquinate (DHQ). The chain is 3-dehydroquinate synthase from Thermococcus kodakarensis (strain ATCC BAA-918 / JCM 12380 / KOD1) (Pyrococcus kodakaraensis (strain KOD1)).